Here is a 40-residue protein sequence, read N- to C-terminus: Photosystem II reaction center protein J (40 aa).

Residues 8-28 (IPLWLIGTVTGIPVIGLVGVF) traverse the membrane as a helical segment.

Belongs to the PsbJ family. In terms of assembly, PSII is composed of 1 copy each of membrane proteins PsbA, PsbB, PsbC, PsbD, PsbE, PsbF, PsbH, PsbI, PsbJ, PsbK, PsbL, PsbM, PsbT, PsbX, PsbY, PsbZ, Psb30/Ycf12, at least 3 peripheral proteins of the oxygen-evolving complex and a large number of cofactors. It forms dimeric complexes.

Its subcellular location is the plastid. The protein localises to the chloroplast thylakoid membrane. Its function is as follows. One of the components of the core complex of photosystem II (PSII). PSII is a light-driven water:plastoquinone oxidoreductase that uses light energy to abstract electrons from H(2)O, generating O(2) and a proton gradient subsequently used for ATP formation. It consists of a core antenna complex that captures photons, and an electron transfer chain that converts photonic excitation into a charge separation. The chain is Photosystem II reaction center protein J from Lolium perenne (Perennial ryegrass).